We begin with the raw amino-acid sequence, 186 residues long: Putative manganese efflux pump MntP (186 aa).

The next 6 membrane-spanning stretches (helical) occupy residues 5–25 (VLIG…MDAF), 41–61 (VFQI…GGMI), 72–92 (ALAG…MIVA), 107–127 (FGLF…GLSL), 135–155 (ILTI…GLLL), and 166–186 (YSEA…LLPI).

Belongs to the MntP (TC 9.B.29) family.

The protein resides in the cell membrane. Functionally, probably functions as a manganese efflux pump. The sequence is that of Putative manganese efflux pump MntP from Bacillus licheniformis (strain ATCC 14580 / DSM 13 / JCM 2505 / CCUG 7422 / NBRC 12200 / NCIMB 9375 / NCTC 10341 / NRRL NRS-1264 / Gibson 46).